A 230-amino-acid chain; its full sequence is MIKAILTDIEGTTTPISFVKDVLFPYSYEKIEEFVKNNLQNPQVQKIIEDVKKEINKSDASLEEVIENLKSWIVEDKKITPLKELQGLIWEEGYKSGKLQGFVYPDAYNKLKEWFDSGIKIFIYSSGSVKAQKLLFSNTNYGDLNYLFSGYFDTNIGNKKDKQSYVKIAKEIGFSPSEILFLSDNPDEIIAAASAGYNVIRLVRPLDADHIDNFPYKQVESFDEIEIGRV.

The protein belongs to the HAD-like hydrolase superfamily. MasA/MtnC family. Monomer. The cofactor is Mg(2+).

It carries out the reaction 5-methylsulfanyl-2,3-dioxopentyl phosphate + H2O = 1,2-dihydroxy-5-(methylsulfanyl)pent-1-en-3-one + phosphate. It functions in the pathway amino-acid biosynthesis; L-methionine biosynthesis via salvage pathway; L-methionine from S-methyl-5-thio-alpha-D-ribose 1-phosphate: step 3/6. Its pathway is amino-acid biosynthesis; L-methionine biosynthesis via salvage pathway; L-methionine from S-methyl-5-thio-alpha-D-ribose 1-phosphate: step 4/6. Functionally, bifunctional enzyme that catalyzes the enolization of 2,3-diketo-5-methylthiopentyl-1-phosphate (DK-MTP-1-P) into the intermediate 2-hydroxy-3-keto-5-methylthiopentenyl-1-phosphate (HK-MTPenyl-1-P), which is then dephosphorylated to form the acireductone 1,2-dihydroxy-3-keto-5-methylthiopentene (DHK-MTPene). The sequence is that of Enolase-phosphatase E1 from Sulfurihydrogenibium sp. (strain YO3AOP1).